Reading from the N-terminus, the 545-residue chain is POTE ankyrin domain family member H (545 aa).

7 ANK repeats span residues 180 to 208 (LHRA…KKDK), 209 to 238 (QKRT…QLNI), 242 to 271 (KKRT…DPNI), 275 to 304 (YGNT…DIES), 308 to 337 (HGLT…NLNA), 341 to 370 (YGRT…DVSS), and 374 to 404 (SGQT…QILK). The disordered stretch occupies residues 406-524 (SSENSNPEQD…KQLSEEQNTG (119 aa)). Composition is skewed to basic and acidic residues over residues 414–429 (QDLK…RLKG) and 443–458 (EINK…EMKK). Residues 513 to 524 (TQKQLSEEQNTG) show a composition bias toward polar residues.

It belongs to the POTE family.

In Homo sapiens (Human), this protein is POTE ankyrin domain family member H (POTEH).